The primary structure comprises 302 residues: MEFSTSSFIFDDDTPPKCPLATKASFIFSVYIIIGLIISYLLQIFRIVRLGSSQGLSFSYLILGYIGVLNAFSNVIALQISPLTECCQNYYSKKQCFANTTGLIQVGSQVLIMGCVLMAFWMFLPRPIHFVAADDENGLPIPEPLSVTKSRKWRKASYGLLGVFTWGLFIICLSATVLSSNFAWAAFLGFSASFCAVVQYVPQIIKTIRHQSHGALSIPMMMMQTPGGFLIGYLLSRLPGTNWTTYMMYIVSACLQGLLLMLCMFYLHKEKSRRKREELQATLQEEESQRAVRILEAETGPE.

7 helical membrane-spanning segments follow: residues 25 to 45 (SFIF…LQIF), 58 to 78 (FSYL…VIAL), 104 to 124 (IQVG…WMFL), 158 to 178 (YGLL…ATVL), 182 to 202 (FAWA…QYVP), 215 to 235 (ALSI…GYLL), and 247 to 267 (MMYI…MFYL). A PQ-loop domain is found at 175 to 245 (ATVLSSNFAW…SRLPGTNWTT (71 aa)).

The protein localises to the membrane. This is an uncharacterized protein from Schizosaccharomyces pombe (strain 972 / ATCC 24843) (Fission yeast).